We begin with the raw amino-acid sequence, 843 residues long: Protein P (843 aa).

The segment at 1 to 177 (MPLSYPHFRK…FCGSPYSWEQ (177 aa)) is terminal protein domain (TP). Residues 178–346 (ELQHGSTSIN…YCLSHIINLL (169 aa)) form a spacer region. Disordered stretches follow at residues 180-221 (QHGS…FQQS) and 282-313 (REKT…GSVR). Polar residues predominate over residues 196–221 (SLCTQSSGILSRPSAGSSIQGKFQQS). Residues 347 to 690 (EDWGPCYEHG…YMHLYPVARQ (344 aa)) form a polymerase/reverse transcriptase domain (RT) region. In terms of domain architecture, Reverse transcriptase spans 357–600 (QHHIRTPRTP…YTLNFMGYVI (244 aa)). 3 residues coordinate Mg(2+): aspartate 429, aspartate 551, and aspartate 552.

This sequence belongs to the hepadnaviridae P protein family.

It carries out the reaction DNA(n) + a 2'-deoxyribonucleoside 5'-triphosphate = DNA(n+1) + diphosphate. The catalysed reaction is Endonucleolytic cleavage to 5'-phosphomonoester.. With respect to regulation, activated by host HSP70 and HSP40 in vitro to be able to bind the epsilon loop of the pgRNA. Because deletion of the RNase H region renders the protein partly chaperone-independent, the chaperones may be needed indirectly to relieve occlusion of the RNA-binding site by this domain. Inhibited by several reverse-transcriptase inhibitors: Lamivudine, Adefovir and Entecavir. Multifunctional enzyme that converts the viral RNA genome into dsDNA in viral cytoplasmic capsids. This enzyme displays a DNA polymerase activity that can copy either DNA or RNA templates, and a ribonuclease H (RNase H) activity that cleaves the RNA strand of RNA-DNA heteroduplexes in a partially processive 3'- to 5'-endonucleasic mode. Neo-synthesized pregenomic RNA (pgRNA) are encapsidated together with the P protein, and reverse-transcribed inside the nucleocapsid. Initiation of reverse-transcription occurs first by binding the epsilon loop on the pgRNA genome, and is initiated by protein priming, thereby the 5'-end of (-)DNA is covalently linked to P protein. Partial (+)DNA is synthesized from the (-)DNA template and generates the relaxed circular DNA (RC-DNA) genome. After budding and infection, the RC-DNA migrates in the nucleus, and is converted into a plasmid-like covalently closed circular DNA (cccDNA). The activity of P protein does not seem to be necessary for cccDNA generation, and is presumably released from (+)DNA by host nuclear DNA repair machinery. This chain is Protein P, found in Homo sapiens (Human).